The chain runs to 117 residues: NADH-ubiquinone oxidoreductase chain 3 (117 aa).

Helical transmembrane passes span 1-21 (MLMLSTMTLIIFIITIVVMML), 58-78 (FLIAIIFLIFDVEIALLLPMI), and 86-106 (LMNWTITSLFFIFILLIGLYH).

The protein belongs to the complex I subunit 3 family.

The protein localises to the mitochondrion membrane. The enzyme catalyses a ubiquinone + NADH + 5 H(+)(in) = a ubiquinol + NAD(+) + 4 H(+)(out). Functionally, core subunit of the mitochondrial membrane respiratory chain NADH dehydrogenase (Complex I) that is believed to belong to the minimal assembly required for catalysis. Complex I functions in the transfer of electrons from NADH to the respiratory chain. The immediate electron acceptor for the enzyme is believed to be ubiquinone. This chain is NADH-ubiquinone oxidoreductase chain 3 (mt:ND3), found in Anopheles gambiae (African malaria mosquito).